The chain runs to 635 residues: DNA primase (635 aa).

The CHC2-type zinc-finger motif lies at Cys41–Cys65. Positions Asp265–Asn348 constitute a Toprim domain. The Mg(2+) site is built by Glu271, Asp317, and Asp319.

It belongs to the DnaG primase family. In terms of assembly, monomer. Interacts with DnaB. The cofactor is Zn(2+). Mg(2+) is required as a cofactor.

It carries out the reaction ssDNA + n NTP = ssDNA/pppN(pN)n-1 hybrid + (n-1) diphosphate.. In terms of biological role, RNA polymerase that catalyzes the synthesis of short RNA molecules used as primers for DNA polymerase during DNA replication. The sequence is that of DNA primase from Synechocystis sp. (strain ATCC 27184 / PCC 6803 / Kazusa).